The sequence spans 381 residues: Phospholipid scramblase family protein C343.06c (381 aa).

The tract at residues Gln336–Gln369 is disordered. Positions Glu344 to Pro359 are enriched in polar residues.

It belongs to the phospholipid scramblase family.

The protein resides in the mitochondrion. This chain is Phospholipid scramblase family protein C343.06c, found in Schizosaccharomyces pombe (strain 972 / ATCC 24843) (Fission yeast).